We begin with the raw amino-acid sequence, 64 residues long: Carnocyclin-A (64 aa).

A propeptide spanning residues 1-4 (MLYE) is cleaved from the precursor. Residues 5–64 (LVAYGIAQGTAEKVVSLINAGLTVGSIISILGGVTVGLSGVFTAVKAAIAKQGIKKAIQL) constitute a cross-link (cyclopeptide (Leu-Leu)).

The protein localises to the secreted. In terms of biological role, cyclopeptide antibiotic that inhibits the growth of Gram-positive bacteria, but has no effect on the growth of Gram-negative bacteria. The polypeptide is Carnocyclin-A (Carnobacterium maltaromaticum (Carnobacterium piscicola)).